Here is a 144-residue protein sequence, read N- to C-terminus: MLLPKRVKYRRQHRPKTTGRSKGGNYVTFGEYGLQATTTSWITSRQIESARIAMTRYMKRGGKVWIKIFPHTPYTKKPLEVRMGAGKGAVEGWIAVVKPGRILFEVAGVPEEVAREALRLASHKLPVKSKFVKREELGGETNES.

Residues 1 to 19 (MLLPKRVKYRRQHRPKTTG) show a composition bias toward basic residues. Residues 1–23 (MLLPKRVKYRRQHRPKTTGRSKG) are disordered.

It belongs to the universal ribosomal protein uL16 family. Part of the 50S ribosomal subunit.

Functionally, binds 23S rRNA and is also seen to make contacts with the A and possibly P site tRNAs. This Staphylococcus epidermidis (strain ATCC 35984 / DSM 28319 / BCRC 17069 / CCUG 31568 / BM 3577 / RP62A) protein is Large ribosomal subunit protein uL16.